The chain runs to 199 residues: MSSGNAKIGYPAPNFKATAVMPDGQFKDISLSEYKGKYVVFFFYPLDFTFVCPTEIIAFSDRADEFKKLNCQVIGASVDSHFCHLAWINTPKKQGGLGPMNIPLISDPKRTIAQDYGVLKADEGISFRGLFIIDDKGILRQITINDLPVGRSVDEIIRLVQAFQFTDKHGEVCPAGWKPGSDTIKPDVNKSKEYFSKQK.

At Ser2 the chain carries N-acetylserine. The region spanning 6 to 165 (AKIGYPAPNF…IIRLVQAFQF (160 aa)) is the Thioredoxin domain. Lys7 bears the N6-acetyllysine; alternate mark. Residue Lys7 forms a Glycyl lysine isopeptide (Lys-Gly) (interchain with G-Cter in SUMO2); alternate linkage. 2 positions are modified to N6-acetyllysine: Lys16 and Lys27. At Ser32 the chain carries Phosphoserine. Lys35 is modified (N6-acetyllysine; alternate). Lys35 carries the post-translational modification N6-succinyllysine; alternate. Cys52 functions as the Cysteine sulfenic acid (-SOH) intermediate in the catalytic mechanism. A Phosphothreonine modification is found at Thr90. Lys120 participates in a covalent cross-link: Glycyl lysine isopeptide (Lys-Gly) (interchain with G-Cter in SUMO2). Lys136 is modified (N6-acetyllysine). Lys185 is covalently cross-linked (Glycyl lysine isopeptide (Lys-Gly) (interchain with G-Cter in SUMO1)). At Lys197 the chain carries N6-acetyllysine.

The protein belongs to the peroxiredoxin family. AhpC/Prx1 subfamily. Homodimer; disulfide-linked, upon oxidation. 5 homodimers assemble to form a ring-like decamer. Interacts with GDPD5; forms a mixed-disulfide with GDPD5. Interacts with SESN1 and SESN2. Interacts with FAM107A. In terms of processing, phosphorylated on Thr-90 during the M-phase, which leads to a decrease in enzymatic activity. Acetylation increases reducing activity and resistance to superoxidation. Deacetylated by HDAC6 which decreases reducing activity. As to expression, found in various tissues; high concentration in liver.

It localises to the cytoplasm. It carries out the reaction a hydroperoxide + [thioredoxin]-dithiol = an alcohol + [thioredoxin]-disulfide + H2O. Its function is as follows. Thiol-specific peroxidase that catalyzes the reduction of hydrogen peroxide and organic hydroperoxides to water and alcohols, respectively. Plays a role in cell protection against oxidative stress by detoxifying peroxides and as sensor of hydrogen peroxide-mediated signaling events. Might participate in the signaling cascades of growth factors and tumor necrosis factor-alpha by regulating the intracellular concentrations of H(2)O(2). Reduces an intramolecular disulfide bond in GDPD5 that gates the ability to GDPD5 to drive postmitotic motor neuron differentiation. This is Peroxiredoxin-1 (Prdx1) from Mus musculus (Mouse).